A 238-amino-acid polypeptide reads, in one-letter code: 1-(5-phosphoribosyl)-5-[(5-phosphoribosylamino)methylideneamino] imidazole-4-carboxamide isomerase (238 aa).

Asp-8 functions as the Proton acceptor in the catalytic mechanism. Residue Asp-129 is the Proton donor of the active site.

Belongs to the HisA/HisF family.

The protein localises to the cytoplasm. The catalysed reaction is 1-(5-phospho-beta-D-ribosyl)-5-[(5-phospho-beta-D-ribosylamino)methylideneamino]imidazole-4-carboxamide = 5-[(5-phospho-1-deoxy-D-ribulos-1-ylimino)methylamino]-1-(5-phospho-beta-D-ribosyl)imidazole-4-carboxamide. It functions in the pathway amino-acid biosynthesis; L-histidine biosynthesis; L-histidine from 5-phospho-alpha-D-ribose 1-diphosphate: step 4/9. The polypeptide is 1-(5-phosphoribosyl)-5-[(5-phosphoribosylamino)methylideneamino] imidazole-4-carboxamide isomerase (Lacticaseibacillus casei (strain BL23) (Lactobacillus casei)).